The sequence spans 692 residues: Elongation factor G (692 aa).

Residues 8-282 (EKTRNIGIMA…AIVDFLPAPT (275 aa)) enclose the tr-type G domain. Residues 17-24 (AHIDAGKT), 81-85 (DTPGH), and 135-138 (NKMD) each bind GTP.

This sequence belongs to the TRAFAC class translation factor GTPase superfamily. Classic translation factor GTPase family. EF-G/EF-2 subfamily.

It localises to the cytoplasm. Catalyzes the GTP-dependent ribosomal translocation step during translation elongation. During this step, the ribosome changes from the pre-translocational (PRE) to the post-translocational (POST) state as the newly formed A-site-bound peptidyl-tRNA and P-site-bound deacylated tRNA move to the P and E sites, respectively. Catalyzes the coordinated movement of the two tRNA molecules, the mRNA and conformational changes in the ribosome. The polypeptide is Elongation factor G (Moorella thermoacetica (strain ATCC 39073 / JCM 9320)).